A 117-amino-acid chain; its full sequence is Small ribosomal subunit protein uS19c (117 aa).

The protein belongs to the universal ribosomal protein uS19 family.

The protein resides in the plastid. In terms of biological role, protein S19 forms a complex with S13 that binds strongly to the 16S ribosomal RNA. This chain is Small ribosomal subunit protein uS19c (rps19), found in Helicosporidium sp. subsp. Simulium jonesii (Green alga).